A 707-amino-acid polypeptide reads, in one-letter code: Eomesodermin homolog (707 aa).

The segment covering 27 to 42 (GGGGGGGGGGGGGGGS) has biased composition (gly residues). Residues 27 to 125 (GGGGGGGGGG…GSPCAEEELP (99 aa)) form a disordered region. Over residues 73-93 (AGSAEPAGAGAGAPAAMLSDA) the composition is skewed to low complexity. Position 117 is a phosphoserine (Ser117). A DNA-binding region (T-box) is located at residues 278–458 (LWLKFHRHQT…HNPFAKGFRD (181 aa)). Residue Thr473 is modified to Phosphothreonine. Positions 592–707 (AMAGWGGRGA…GAYYAFYTSP (116 aa)) are required for transcription activation. Residues 642–689 (TPPSIKSLDSSDSGVYNSACKRKRLSPSTPSNGNSPPIKCEDINTEEY) are disordered. Polar residues predominate over residues 648–657 (SLDSSDSGVY). Low complexity predominate over residues 667 to 678 (SPSTPSNGNSPP). Residues 680 to 689 (KCEDINTEEY) show a composition bias toward basic and acidic residues.

Expressed in CD8+ T-cells.

Its subcellular location is the nucleus. In terms of biological role, functions as a transcriptional activator playing a crucial role during development. Functions in trophoblast differentiation and later in gastrulation, regulating both mesoderm delamination and endoderm specification. Plays a role in brain development being required for the specification and the proliferation of the intermediate progenitor cells and their progeny in the cerebral cortex. Required for differentiation and migration of unipolar dendritic brush cells. Also involved in the differentiation of CD8+ T-cells during immune response regulating the expression of lytic effector genes. In Mus musculus (Mouse), this protein is Eomesodermin homolog (Eomes).